The sequence spans 804 residues: Ribonucleoside-diphosphate reductase large subunit-like protein (804 aa).

It belongs to the ribonucleoside diphosphate reductase large chain family.

The protein localises to the virion. It localises to the host cytoplasm. Does not possess a ribonucleotide reductase activity. Betaherpesviruses probably use another strategy to expand the dNTP pool in a quiescent host cell. In Homo sapiens (Human), this protein is Ribonucleoside-diphosphate reductase large subunit-like protein.